Here is a 457-residue protein sequence, read N- to C-terminus: RuvB-like helicase 1 (457 aa).

Residue Gly-73–Thr-80 coordinates ATP.

Belongs to the RuvB family. May form heterododecamers with RVB2. Component of the SWR1 chromatin remodeling complex, the INO80 chromatin remodeling complex, and of the R2TP complex.

The protein resides in the nucleus. The enzyme catalyses ATP + H2O = ADP + phosphate + H(+). DNA helicase which participates in several chromatin remodeling complexes, including the SWR1 and the INO80 complexes. The SWR1 complex mediates the ATP-dependent exchange of histone H2A for the H2A variant HZT1 leading to transcriptional regulation of selected genes by chromatin remodeling. The INO80 complex remodels chromatin by shifting nucleosomes and is involved in DNA repair. Also involved in pre-rRNA processing. In Candida glabrata (strain ATCC 2001 / BCRC 20586 / JCM 3761 / NBRC 0622 / NRRL Y-65 / CBS 138) (Yeast), this protein is RuvB-like helicase 1 (RVB1).